The sequence spans 263 residues: MPEGPEIRRAADNLEAAIKGKPLTDVWFAFPQLKTYQSQLIGQHVTHVETRGKALLTHFSNDLTLYSHNQLYGVWRVVDTGEEPQTTRVLRVKLQTADKTILLYSASDIEMLRPEQLTTHPFLQRVGPDVLDPNLTPEVVKERLLSPRFRNRQFAGLLLDQAFLAGLGNYLRVEILWQVGLTGNHKAKDLNAAQLDALAHALLEIPRFSYATRGQVDENKHHGALFRFKVFHRDGELCERCGGIIEKTTLSSRPFYWCPGCQH.

The active-site Schiff-base intermediate with DNA is the Pro-2. Catalysis depends on Glu-3, which acts as the Proton donor. Lys-53 functions as the Proton donor; for beta-elimination activity in the catalytic mechanism. Residues Gln-70, Arg-125, and Asn-169 each contribute to the DNA site. The FPG-type zinc finger occupies 229–263; it reads KVFHRDGELCERCGGIIEKTTLSSRPFYWCPGCQH. Catalysis depends on Arg-253, which acts as the Proton donor; for delta-elimination activity.

It belongs to the FPG family. The cofactor is Zn(2+).

It carries out the reaction 2'-deoxyribonucleotide-(2'-deoxyribose 5'-phosphate)-2'-deoxyribonucleotide-DNA = a 3'-end 2'-deoxyribonucleotide-(2,3-dehydro-2,3-deoxyribose 5'-phosphate)-DNA + a 5'-end 5'-phospho-2'-deoxyribonucleoside-DNA + H(+). In terms of biological role, involved in base excision repair of DNA damaged by oxidation or by mutagenic agents. Acts as a DNA glycosylase that recognizes and removes damaged bases. Has a preference for oxidized pyrimidines, such as thymine glycol, 5,6-dihydrouracil and 5,6-dihydrothymine. Has AP (apurinic/apyrimidinic) lyase activity and introduces nicks in the DNA strand. Cleaves the DNA backbone by beta-delta elimination to generate a single-strand break at the site of the removed base with both 3'- and 5'-phosphates. In Escherichia coli (strain SE11), this protein is Endonuclease 8.